We begin with the raw amino-acid sequence, 315 residues long: Ribosomal RNA small subunit methyltransferase H (315 aa).

S-adenosyl-L-methionine-binding positions include 37–39 (GGH), D57, F83, D105, and Q112.

The protein belongs to the methyltransferase superfamily. RsmH family.

It is found in the cytoplasm. The catalysed reaction is cytidine(1402) in 16S rRNA + S-adenosyl-L-methionine = N(4)-methylcytidine(1402) in 16S rRNA + S-adenosyl-L-homocysteine + H(+). Specifically methylates the N4 position of cytidine in position 1402 (C1402) of 16S rRNA. The polypeptide is Ribosomal RNA small subunit methyltransferase H (Pseudomonas entomophila (strain L48)).